A 273-amino-acid polypeptide reads, in one-letter code: Vitamin B12-binding protein (273 aa).

An N-terminal signal peptide occupies residues 1–18 (MMKTLSSLLLLFSVSLQA). The Fe/B12 periplasmic-binding domain maps to 23 to 273 (RVISLAPHAT…EHFASIEQKR (251 aa)). Cysteine 183 and cysteine 263 are oxidised to a cystine.

This sequence belongs to the BtuF family. The complex is composed of two ATP-binding proteins (BtuD), two transmembrane proteins (BtuC) and a solute-binding protein (BtuF).

It localises to the periplasm. Functionally, part of the ABC transporter complex BtuCDF involved in vitamin B12 import. Binds vitamin B12 and delivers it to the periplasmic surface of BtuC. The protein is Vitamin B12-binding protein of Vibrio vulnificus (strain YJ016).